We begin with the raw amino-acid sequence, 219 residues long: MNHYIDHTLLLANATTKQINTLCDEAHEHQFFSVCINPDFVEHCAERLNTSNVKICTVIGFPLGANTTAVKVFETQNAISLGADEIDMVVNISDVLDGKWDVIEKEIVAIKEACGPKLLKVIFETCLLTNEQIVKLCNISKRAGADFVKTSTGFSTGGATVEHIKLMRDTVGKQMGVKASGGVRTKETAQAMIDAGASRVGASASVSIVTGEAPTTNGY.

D87 functions as the Proton donor/acceptor in the catalytic mechanism. The Schiff-base intermediate with acetaldehyde role is filled by K149. Catalysis depends on K178, which acts as the Proton donor/acceptor.

Belongs to the DeoC/FbaB aldolase family. DeoC type 1 subfamily.

Its subcellular location is the cytoplasm. The catalysed reaction is 2-deoxy-D-ribose 5-phosphate = D-glyceraldehyde 3-phosphate + acetaldehyde. Its pathway is carbohydrate degradation; 2-deoxy-D-ribose 1-phosphate degradation; D-glyceraldehyde 3-phosphate and acetaldehyde from 2-deoxy-alpha-D-ribose 1-phosphate: step 2/2. Its function is as follows. Catalyzes a reversible aldol reaction between acetaldehyde and D-glyceraldehyde 3-phosphate to generate 2-deoxy-D-ribose 5-phosphate. The polypeptide is Deoxyribose-phosphate aldolase 1 (Vibrio vulnificus (strain YJ016)).